A 132-amino-acid polypeptide reads, in one-letter code: Ubiquinol-cytochrome c reductase complex assembly factor 4 (132 aa).

The N-terminal stretch at 1–15 (MNRVLCAPAAGAVRA) is a signal peptide. At 16–78 (LRLIGWASRS…GKGHQRPWWK (63 aa)) the chain is on the mitochondrial matrix side. The disordered stretch occupies residues 29 to 72 (LPGSRDRAHPAAEEEDDPDRPIEFSSSKANPHRWSVGHTMGKGH). A helical membrane pass occupies residues 79–95 (VLPLSCFLVALIIWCYL). At 96–132 (REESEADQWLRQVWGEVPEPSDRSEEPETPAAYRART) the chain is on the mitochondrial intermembrane side. Residues 110-132 (GEVPEPSDRSEEPETPAAYRART) are disordered.

This sequence belongs to the UQCC4 family. In terms of assembly, forms a complex, named COMB/coordinator of mitochondrial CYTB biogenesis, composed of UQCC1, UQCC2, UQCC4, UQCC5 and UQCC6; stabilizes nascent cytochrome b/MT-CYB and promotes its membrane insertion. Forms a complex, named COMA, composed of UQCC1, UQCC2 and UQCC4; activates MT-CYB translation. Forms a complex, named COMC, composed of UQCC1, UQCC2; UQCC3 and UQCC4; mediates MT-CYB hemylation and association with the first nuclear-encoded complex III subunit UQCRQ. Complexes COMA and COMB are bound to the mitochondrion inner membrane by UQCC4.

It is found in the mitochondrion inner membrane. Required for the assembly and stability of the mitochondrial ubiquinol-cytochrome c reductase complex (complex III (CIII) or cytochrome b-c1 complex), a multisubunit transmembrane complex that is part of the mitochondrial electron transport chain (ETC) which drives oxidative phosphorylation. This Homo sapiens (Human) protein is Ubiquinol-cytochrome c reductase complex assembly factor 4.